Reading from the N-terminus, the 185-residue chain is MALQIHSPCSFSTRPYHLFFTTRNPRFAIKCQNSQIESDTTEDPSRSKNSSSSGVGFGSPASSSSPAKKLSAATSGNKKGKGKREVNRRAPVEKPVFMSEEGAAKAEEQRQNENAFLLTWLGLGIVILIEGIILAASGFLPEELDKLFVKYVYPVFTPSVVLFVAGTTAYGVLKYIQNEKMKGQE.

The N-terminal 46 residues, 1 to 46 (MALQIHSPCSFSTRPYHLFFTTRNPRFAIKCQNSQIESDTTEDPSR), are a transit peptide targeting the chloroplast. The disordered stretch occupies residues 35-105 (QIESDTTEDP…VFMSEEGAAK (71 aa)). The span at 47–75 (SKNSSSSGVGFGSPASSSSPAKKLSAATS) shows a compositional bias: low complexity. The segment covering 83 to 92 (KREVNRRAPV) has biased composition (basic and acidic residues). Helical transmembrane passes span 115–135 (AFLL…IILA) and 152–172 (VYPV…AYGV).

Its subcellular location is the plastid. The protein localises to the chloroplast membrane. In Arabidopsis thaliana (Mouse-ear cress), this protein is Protein LPA2.